The following is a 347-amino-acid chain: Intracellular hyaluronan-binding protein 4 (347 aa).

Disordered stretches follow at residues Gly39–Thr221 and Phe298–Ala347. Basic and acidic residues-rich tracts occupy residues Val61 to Thr71, Pro83 to Lys107, Arg116 to Ala125, and Asp146 to Ser174. A compositionally biased stretch (acidic residues) spans Glu199–Asp213. The span at Gly307–Gly319 shows a compositional bias: gly residues. A compositionally biased stretch (acidic residues) spans Asp338 to Ala347.

Belongs to the SERBP1-HABP4 family. Associates with ribosomes; promoting ribosome stabilization. Interacts with eef2/eEF2; promoting ribosome stabilization.

It is found in the nucleus. The protein resides in the cytoplasm. It localises to the stress granule. Its subcellular location is the nucleolus. The protein localises to the nucleus speckle. It is found in the cajal body. Its function is as follows. Ribosome-binding protein that promotes ribosome hibernation, a process during which ribosomes are stabilized in an inactive state and preserved from proteasomal degradation. Acts via its association with eef2/eEF2 factor at the A-site of the ribosome, promoting ribosome stabilization in an inactive state compatible with storage. Plays a key role in ribosome hibernation in the mature egg by promoting ribosome stabilization. Ribosomes, which are produced in large quantities during oogenesis, are stored and translationally repressed in the egg and early embryo. This Danio rerio (Zebrafish) protein is Intracellular hyaluronan-binding protein 4.